Consider the following 34-residue polypeptide: Photosystem II reaction center protein M (34 aa).

The chain crosses the membrane as a helical span at residues 7-27; sequence GFLATLLFVAVPMLFLIGLYI.

The protein belongs to the PsbM family. PSII is composed of 1 copy each of membrane proteins PsbA, PsbB, PsbC, PsbD, PsbE, PsbF, PsbH, PsbI, PsbJ, PsbK, PsbL, PsbM, PsbT, PsbX, PsbY, Psb30/Ycf12, peripheral proteins PsbO, CyanoQ (PsbQ), PsbU, PsbV and a large number of cofactors. It forms dimeric complexes.

It is found in the cellular thylakoid membrane. Functionally, one of the components of the core complex of photosystem II (PSII). PSII is a light-driven water:plastoquinone oxidoreductase that uses light energy to abstract electrons from H(2)O, generating O(2) and a proton gradient subsequently used for ATP formation. It consists of a core antenna complex that captures photons, and an electron transfer chain that converts photonic excitation into a charge separation. This subunit is found at the monomer-monomer interface. The protein is Photosystem II reaction center protein M of Prochlorococcus marinus (strain MIT 9303).